A 92-amino-acid chain; its full sequence is Acylphosphatase (92 aa).

Residues 5 to 92 (RAHVFISGRV…GKEGIFTIVW (88 aa)) form the Acylphosphatase-like domain. Residues arginine 20 and asparagine 38 contribute to the active site.

The protein belongs to the acylphosphatase family.

It carries out the reaction an acyl phosphate + H2O = a carboxylate + phosphate + H(+). The sequence is that of Acylphosphatase (acyP) from Chloroflexus aurantiacus (strain ATCC 29366 / DSM 635 / J-10-fl).